We begin with the raw amino-acid sequence, 513 residues long: uncharacterized protein (513 aa).

The CYTH domain maps to 11 to 219 (HLEVERKFDV…SKLARVLGAT (209 aa)). In terms of domain architecture, CHAD spans 228–506 (PQPPADPVHR…LEAALRKLDK (279 aa)).

This is an uncharacterized protein from Mycobacterium tuberculosis (strain ATCC 25618 / H37Rv).